We begin with the raw amino-acid sequence, 329 residues long: Type 2 lactosamine alpha-2,3-sialyltransferase (329 aa).

Topologically, residues 1–4 (MKGY) are cytoplasmic. A helical; Signal-anchor for type II membrane protein transmembrane segment spans residues 5 to 25 (LVAIFLSSIFLYYVLYCILWG). Over 26-329 (TNGYWFPAEE…IKKKMVINLT (304 aa)) the chain is Lumenal. N-linked (GlcNAc...) asparagine glycans are attached at residues asparagine 129, asparagine 181, asparagine 295, and asparagine 308.

This sequence belongs to the glycosyltransferase 29 family.

It localises to the golgi apparatus membrane. It carries out the reaction a neolactoside nLc4Cer(d18:1(4E)) + CMP-N-acetyl-beta-neuraminate = a neolactoside IV(3)-alpha-NeuAc-nLc4Cer(d18:1(4E)) + CMP + H(+). The catalysed reaction is a beta-D-galactosyl-(1-&gt;4)-N-acetyl-beta-D-glucosaminyl derivative + CMP-N-acetyl-beta-neuraminate = an N-acetyl-alpha-neuraminyl-(2-&gt;3)-beta-D-galactosyl-(1-&gt;4)-N-acetyl-beta-D-glucosaminyl derivative + CMP + H(+). The enzyme catalyses a neolactoside nLc6Cer(d18:1(4E)) + CMP-N-acetyl-beta-neuraminate = a neolactoside VI(3)-alpha-NeuNAc-nLc6Cer(d18:1(4E)) + CMP + H(+). Transfers the sialyl residue from CMP-N-acetyl-beta-neuraminate to the terminal galactose residue on sugar chains of glycoproteins and glycolipids. It's alpha-2,3-sialyltransferase activity is specific toward type II glycan chains (Galbeta1-4GlcNAc) on glycoproteins and glycolipids such as neolactosides nLc4Cer and nLc6Cer, whose sialyl-products serve as precursors for the Lewis X antigen. Critically involved in the synthesis of functional selectin ligands needed for neutrophil recruitment during inflammation and lymphocyte homing to the lymph nodes. The polypeptide is Type 2 lactosamine alpha-2,3-sialyltransferase (St3gal6) (Mus musculus (Mouse)).